The sequence spans 447 residues: MREIISIHIGQAGIQVGNSCWELYCLEHGIQPDGLMPSDTSLGVARDAFNTFFSETGAGKHVPRALFVDLEPTVIDEVKTGPYRQLFHPEQLISYKEDAANNFARGHYTVGREIVDPCLDRIRKLADNCTGLQGFLVFNAVGGGTGSGLGSLLLERLSVDYGRKSKLGFTIYPSPQISTAVVEPYNSVLSTHSLIEHTDVVVLLDNEAIYDICKRSLDIERPTYTNLNRLISQVISSLTTSLRFDGAINVDITEFQTNLVPYPRIHFMLSSYAPIISVEKAYHEQHSVPEITNSVFESSSVMAKCDPRHGKYMACCLMYRGDVVPKDVNAAVHSIKTKRTVQFVDWCPTGFKCGINYQPPTVVPGGDLAKVQRAVCMISNNTAVAEVFSRIDRKFDLMYAKRAFVHWYVGEGMEEGEFSEAREDLAALEKDYEEVGAEVEEDDEEEY.

GTP is bound by residues Gln11, Glu71, Gly144, Thr145, Thr179, Asn206, and Asn228. Glu71 lines the Mg(2+) pocket. The active site involves Glu254.

The protein belongs to the tubulin family. As to quaternary structure, dimer of alpha and beta chains. A typical microtubule is a hollow water-filled tube with an outer diameter of 25 nm and an inner diameter of 15 nM. Alpha-beta heterodimers associate head-to-tail to form protofilaments running lengthwise along the microtubule wall with the beta-tubulin subunit facing the microtubule plus end conferring a structural polarity. Microtubules usually have 13 protofilaments but different protofilament numbers can be found in some organisms and specialized cells. Requires Mg(2+) as cofactor. In terms of processing, undergoes a tyrosination/detyrosination cycle, the cyclic removal and re-addition of a C-terminal tyrosine residue by the enzymes tubulin tyrosine carboxypeptidase (TTCP) and tubulin tyrosine ligase (TTL), respectively.

Its subcellular location is the cytoplasm. The protein localises to the cytoskeleton. It catalyses the reaction GTP + H2O = GDP + phosphate + H(+). Functionally, tubulin is the major constituent of microtubules, a cylinder consisting of laterally associated linear protofilaments composed of alpha- and beta-tubulin heterodimers. Microtubules grow by the addition of GTP-tubulin dimers to the microtubule end, where a stabilizing cap forms. Below the cap, tubulin dimers are in GDP-bound state, owing to GTPase activity of alpha-tubulin. This Eleusine indica (Goosegrass) protein is Tubulin alpha-2 chain (TUBA2).